Consider the following 220-residue polypeptide: UPF0319 protein YccT (220 aa).

The signal sequence occupies residues Met1–Ala20.

It belongs to the UPF0319 family.

In Salmonella heidelberg (strain SL476), this protein is UPF0319 protein YccT.